The chain runs to 809 residues: Leucine--tRNA ligase (809 aa).

Positions 40–50 match the 'HIGH' region motif; it reads PYPSGRIHMGH. Residues 579–583 carry the 'KMSKS' region motif; the sequence is KMSKS. Residue Lys-582 coordinates ATP.

Belongs to the class-I aminoacyl-tRNA synthetase family.

It is found in the cytoplasm. The enzyme catalyses tRNA(Leu) + L-leucine + ATP = L-leucyl-tRNA(Leu) + AMP + diphosphate. This chain is Leucine--tRNA ligase, found in Campylobacter jejuni subsp. doylei (strain ATCC BAA-1458 / RM4099 / 269.97).